A 212-amino-acid polypeptide reads, in one-letter code: Large ribosomal subunit protein uL3 (212 aa).

At Q153 the chain carries N5-methylglutamine.

This sequence belongs to the universal ribosomal protein uL3 family. As to quaternary structure, part of the 50S ribosomal subunit. Forms a cluster with proteins L14 and L19. Methylated by PrmB.

In terms of biological role, one of the primary rRNA binding proteins, it binds directly near the 3'-end of the 23S rRNA, where it nucleates assembly of the 50S subunit. This Acinetobacter baylyi (strain ATCC 33305 / BD413 / ADP1) protein is Large ribosomal subunit protein uL3.